The chain runs to 729 residues: Phosphoribosylformylglycinamidine synthase subunit PurL (729 aa).

The active site involves His-54. Residues Tyr-57 and Lys-96 each contribute to the ATP site. Glu-98 contacts Mg(2+). Substrate is bound by residues 99–102 and Arg-121; that span reads SHNH. His-100 serves as the catalytic Proton acceptor. Asp-122 contacts Mg(2+). A substrate-binding site is contributed by Gln-245. Asp-273 provides a ligand contact to Mg(2+). A substrate-binding site is contributed by 317–319; it reads ETQ. ATP-binding residues include Asp-495 and Gly-532. Residue Asn-533 coordinates Mg(2+). Ser-535 provides a ligand contact to substrate.

This sequence belongs to the FGAMS family. In terms of assembly, monomer. Part of the FGAM synthase complex composed of 1 PurL, 1 PurQ and 2 PurS subunits.

The protein localises to the cytoplasm. The enzyme catalyses N(2)-formyl-N(1)-(5-phospho-beta-D-ribosyl)glycinamide + L-glutamine + ATP + H2O = 2-formamido-N(1)-(5-O-phospho-beta-D-ribosyl)acetamidine + L-glutamate + ADP + phosphate + H(+). It participates in purine metabolism; IMP biosynthesis via de novo pathway; 5-amino-1-(5-phospho-D-ribosyl)imidazole from N(2)-formyl-N(1)-(5-phospho-D-ribosyl)glycinamide: step 1/2. In terms of biological role, part of the phosphoribosylformylglycinamidine synthase complex involved in the purines biosynthetic pathway. Catalyzes the ATP-dependent conversion of formylglycinamide ribonucleotide (FGAR) and glutamine to yield formylglycinamidine ribonucleotide (FGAM) and glutamate. The FGAM synthase complex is composed of three subunits. PurQ produces an ammonia molecule by converting glutamine to glutamate. PurL transfers the ammonia molecule to FGAR to form FGAM in an ATP-dependent manner. PurS interacts with PurQ and PurL and is thought to assist in the transfer of the ammonia molecule from PurQ to PurL. The sequence is that of Phosphoribosylformylglycinamidine synthase subunit PurL from Staphylococcus epidermidis (strain ATCC 35984 / DSM 28319 / BCRC 17069 / CCUG 31568 / BM 3577 / RP62A).